Reading from the N-terminus, the 206-residue chain is MTTPSTAPTPAPRKAEVSRNTAETQITVKLNLDGTGKASLSTGIGFFDHMLDQIARHGLIDLDIQAKGDLHIDGHHTVEDVGITFGQAVAQAVGDKKGLRRYGHAYVPLDEALSRVVIDFSGRPGLEMHVPFKSGMIGTFDSQLAYEFFQGFANHAFVTLHIDNLRGDNAHHQAETVFKAFARALRMALEIDPRSAGVIPSTKGSL.

Residues 1–21 (MTTPSTAPTPAPRKAEVSRNT) form a disordered region.

It belongs to the imidazoleglycerol-phosphate dehydratase family.

The protein resides in the cytoplasm. It catalyses the reaction D-erythro-1-(imidazol-4-yl)glycerol 3-phosphate = 3-(imidazol-4-yl)-2-oxopropyl phosphate + H2O. Its pathway is amino-acid biosynthesis; L-histidine biosynthesis; L-histidine from 5-phospho-alpha-D-ribose 1-diphosphate: step 6/9. The polypeptide is Imidazoleglycerol-phosphate dehydratase (Polaromonas sp. (strain JS666 / ATCC BAA-500)).